Consider the following 553-residue polypeptide: Glutamyl-tRNA(Gln) amidotransferase subunit B, mitochondrial (553 aa).

Residues 1–18 (MAASTSGYSGVLFRLRKY) constitute a mitochondrion transit peptide.

Belongs to the GatB/GatE family. GatB subfamily. Subunit of the heterotrimeric GatCAB amidotransferase (AdT) complex, composed of A (qrsl1), B (gatb) and C (gatc) subunits.

Its subcellular location is the mitochondrion. It catalyses the reaction L-glutamyl-tRNA(Gln) + L-glutamine + ATP + H2O = L-glutaminyl-tRNA(Gln) + L-glutamate + ADP + phosphate + H(+). Allows the formation of correctly charged Gln-tRNA(Gln) through the transamidation of misacylated Glu-tRNA(Gln) in the mitochondria. The reaction takes place in the presence of glutamine and ATP through an activated gamma-phospho-Glu-tRNA(Gln). The chain is Glutamyl-tRNA(Gln) amidotransferase subunit B, mitochondrial from Danio rerio (Zebrafish).